The sequence spans 280 residues: DegV domain-containing protein Mb2440c (280 aa).

In terms of domain architecture, DegV spans 3-274; the sequence is VVVVTDTSCR…AGAVGVCVDV (272 aa). Serine 89 serves as a coordination point for hexadecanoate.

Functionally, may bind long-chain fatty acids, such as palmitate, and may play a role in lipid transport or fatty acid metabolism. The sequence is that of DegV domain-containing protein Mb2440c from Mycobacterium bovis (strain ATCC BAA-935 / AF2122/97).